A 145-amino-acid chain; its full sequence is Leptin (145 aa).

Residues Leu1–Ala12 form the signal peptide.

This sequence belongs to the leptin family.

The protein resides in the secreted. In terms of biological role, key player in the regulation of energy balance and body weight control. Once released into the circulation, has central and peripheral effects by binding LEPR, found in many tissues, which results in the activation of several major signaling pathways. In the hypothalamus, acts as an appetite-regulating factor that induces a decrease in food intake and an increase in energy consumption by inducing anorexinogenic factors and suppressing orexigenic neuropeptides, also regulates bone mass and secretion of hypothalamo-pituitary-adrenal hormones. In the periphery, increases basal metabolism, influences reproductive function, regulates pancreatic beta-cell function and insulin secretion, is pro-angiogenic for endothelial cell and affects innate and adaptive immunity. In the arcuate nucleus of the hypothalamus, activates by depolarization POMC neurons inducing FOS and SOCS3 expression to release anorexigenic peptides and inhibits by hyperpolarization NPY neurons inducing SOCS3 with a consequent reduction on release of orexigenic peptides. In addition to its known satiety inducing effect, has a modulatory role in nutrient absorption. In the intestine, reduces glucose absorption by enterocytes by activating PKC and leading to a sequential activation of p38, PI3K and ERK signaling pathways which exerts an inhibitory effect on glucose absorption. Acts as a growth factor on certain tissues, through the activation of different signaling pathways increases expression of genes involved in cell cycle regulation such as CCND1, via JAK2-STAT3 pathway, or VEGFA, via MAPK1/3 and PI3K-AKT1 pathways. May also play an apoptotic role via JAK2-STAT3 pathway and up-regulation of BIRC5 expression. Pro-angiogenic, has mitogenic activity on vascular endothelial cells and plays a role in matrix remodeling by regulating the expression of matrix metalloproteinases (MMPs) and tissue inhibitors of metalloproteinases (TIMPs). In innate immunity, modulates the activity and function of neutrophils by increasing chemotaxis and the secretion of oxygen radicals. Increases phagocytosis by macrophages and enhances secretion of pro-inflammatory mediators. Increases cytotoxic ability of NK cells. Plays a pro-inflammatory role, in synergy with IL1B, by inducing NOS2 which promotes the production of IL6, IL8 and Prostaglandin E2, through a signaling pathway that involves JAK2, PI3K, MAP2K1/MEK1 and MAPK14/p38. In adaptive immunity, promotes the switch of memory T-cells towards T helper-1 cell immune responses. Increases CD4(+)CD25(-) T-cell proliferation and reduces autophagy during TCR (T-cell receptor) stimulation, through MTOR signaling pathway activation and BCL2 up-regulation. The polypeptide is Leptin (LEP) (Equus caballus (Horse)).